Consider the following 175-residue polypeptide: Pituitary adenylate cyclase-activating polypeptide (175 aa).

A signal peptide spans 1–24 (MTMCSGARLALLVYGIIMHNSVSC). The propeptide occupies 25 to 78 (SPAAGLSFPGIRPEEEAYDQDGNPLQDFYDWDPPGAGSPASALRDAYALYYPAD). The tract at residues 149–157 (VKKYLAAVL) is important for receptor binding. Position 157 is a leucine amide (Leu-157). Residue Lys-168 is modified to Lysine amide. Positions 172-175 (IAYL) are excised as a propeptide.

The protein belongs to the glucagon family.

It is found in the secreted. In terms of biological role, PACAP is a neuropeptide involved in diverse array of physiological processes through activating the PACAP subfamily of class B1 G protein-coupled receptors: VIP receptor 1 (VIPR1), VIP receptor 2 (VIPR2), and PACAP type I receptor (ADCYAP1R1). Exerts neuroprotective and general cytoprotective effects due to anti-apoptotic, anti-inflammatory, and antioxidant actions. Promotes neuron projection development through the RAPGEF2/Rap1/B-Raf/ERK pathway. In chromaffin cells, induces long-lasting increase of intracellular calcium concentrations and neuroendocrine secretion. Involved in the control of glucose homeostasis, induces insulin secretion by pancreatic beta cells. PACAP exists in two bioactive forms from proteolysis of the same precursor protein, PACAP27 and PACAP38, which differ by eleven amino acid residues in the C-terminus. The protein is Pituitary adenylate cyclase-activating polypeptide (Adcyap1) of Rattus norvegicus (Rat).